A 400-amino-acid chain; its full sequence is MAVIFVLFFLVSMALSARIRPSFNGTALSGTSNKHPFEPGPNTIFREEVPPSAAASGFPSAHGTELRTHDPSIIKVGSIYYSYSVGPSITIHQAFSLDGPWTEVGALLSGESVIKKGDRKAPWAANTIYINGRYYCYYSVSNSGCRDSAIGVASSAFPGPGEWTDHGLIIQSGTGEGSDVFPLNQSNTIDPNVFVDGDGTAYLNFGSFWTGLWQVPLEEELVTVKGLQDGTLDAVHLAAEPGKVWRSKLANSKAKTVSTSKTGSPICGDPTGGHPIEGGFMAYHAPYYYMWFSWGRCCEFKDPAMRSNGKEYRIRVGRSTSARGPFVDKQGIDLVDGGGETVYGSNGDVFAPGGQGILTDEFGDILYYHYLNSSVSYDFADARLGYNRLEYVDGWPVAVY.

Residues 1–16 form the signal peptide; the sequence is MAVIFVLFFLVSMALS. Asn24 is a glycosylation site (N-linked (GlcNAc...) asparagine). Catalysis depends on Asp70, which acts as the Proton acceptor. Residue Asn184 is glycosylated (N-linked (GlcNAc...) asparagine). The Proton donor role is filled by Glu277. The N-linked (GlcNAc...) asparagine glycan is linked to Asn372.

This sequence belongs to the glycosyl hydrolase 43 family.

The protein resides in the secreted. It carries out the reaction Endohydrolysis of (1-&gt;5)-alpha-arabinofuranosidic linkages in (1-&gt;5)-arabinans.. The protein operates within glycan metabolism; L-arabinan degradation. Endo-1,5-alpha-L-arabinanase involved in degradation of pectin. Its preferred substrate is linear 1,5-alpha-L-arabinan. In Emericella nidulans (strain FGSC A4 / ATCC 38163 / CBS 112.46 / NRRL 194 / M139) (Aspergillus nidulans), this protein is Arabinan endo-1,5-alpha-L-arabinosidase B (abnB).